Here is a 92-residue protein sequence, read N- to C-terminus: Small ribosomal subunit protein uS19c (92 aa).

It belongs to the universal ribosomal protein uS19 family.

Its subcellular location is the plastid. It localises to the chloroplast. Its function is as follows. Protein S19 forms a complex with S13 that binds strongly to the 16S ribosomal RNA. This Phalaenopsis aphrodite subsp. formosana (Moth orchid) protein is Small ribosomal subunit protein uS19c.